Consider the following 446-residue polypeptide: Argininosuccinate lyase (446 aa).

The protein belongs to the lyase 1 family. Argininosuccinate lyase subfamily.

The protein localises to the cytoplasm. The catalysed reaction is 2-(N(omega)-L-arginino)succinate = fumarate + L-arginine. Its pathway is amino-acid biosynthesis; L-arginine biosynthesis; L-arginine from L-ornithine and carbamoyl phosphate: step 3/3. The polypeptide is Argininosuccinate lyase (Parabacteroides distasonis (strain ATCC 8503 / DSM 20701 / CIP 104284 / JCM 5825 / NCTC 11152)).